A 244-amino-acid chain; its full sequence is Phosphoadenosine 5'-phosphosulfate reductase (244 aa).

The Nucleophile; cysteine thiosulfonate intermediate role is filled by Cys-239.

This sequence belongs to the PAPS reductase family. CysH subfamily.

It is found in the cytoplasm. It carries out the reaction [thioredoxin]-disulfide + sulfite + adenosine 3',5'-bisphosphate + 2 H(+) = [thioredoxin]-dithiol + 3'-phosphoadenylyl sulfate. It functions in the pathway sulfur metabolism; hydrogen sulfide biosynthesis; sulfite from sulfate: step 3/3. Catalyzes the formation of sulfite from phosphoadenosine 5'-phosphosulfate (PAPS) using thioredoxin as an electron donor. The protein is Phosphoadenosine 5'-phosphosulfate reductase of Escherichia coli (strain K12 / MC4100 / BW2952).